A 397-amino-acid chain; its full sequence is Acetate kinase 1 (397 aa).

Asn-8 is a binding site for Mg(2+). Residue Lys-15 participates in ATP binding. Arg-89 contacts substrate. Residue Asp-146 is the Proton donor/acceptor of the active site. ATP-binding positions include 206-210 (HLGNG), 281-283 (DLR), and 329-333 (GIGEN). Glu-382 is a binding site for Mg(2+).

Belongs to the acetokinase family. Homodimer. The cofactor is Mg(2+). Requires Mn(2+) as cofactor.

Its subcellular location is the cytoplasm. It carries out the reaction acetate + ATP = acetyl phosphate + ADP. It participates in metabolic intermediate biosynthesis; acetyl-CoA biosynthesis; acetyl-CoA from acetate: step 1/2. Functionally, catalyzes the formation of acetyl phosphate from acetate and ATP. Can also catalyze the reverse reaction. In Listeria monocytogenes serovar 1/2a (strain ATCC BAA-679 / EGD-e), this protein is Acetate kinase 1.